Reading from the N-terminus, the 217-residue chain is Peptide methionine sulfoxide reductase MsrA (217 aa).

C56 is an active-site residue.

It belongs to the MsrA Met sulfoxide reductase family.

The enzyme catalyses L-methionyl-[protein] + [thioredoxin]-disulfide + H2O = L-methionyl-(S)-S-oxide-[protein] + [thioredoxin]-dithiol. It carries out the reaction [thioredoxin]-disulfide + L-methionine + H2O = L-methionine (S)-S-oxide + [thioredoxin]-dithiol. Functionally, has an important function as a repair enzyme for proteins that have been inactivated by oxidation. Catalyzes the reversible oxidation-reduction of methionine sulfoxide in proteins to methionine. This is Peptide methionine sulfoxide reductase MsrA from Rippkaea orientalis (strain PCC 8801 / RF-1) (Cyanothece sp. (strain PCC 8801)).